Reading from the N-terminus, the 332-residue chain is MSVKEDRNVYDVTIIGGGPTGMFAAFYGGLRQMKVKIIESLPQLGGQLAALYPEKYIYDVAGFPKVRAQELVNQLKEQMDLFSPTVCLNESVDTLEKQEDGTFKLVTNQQIHYSKTVIITAGNGAFQPRRLEIESASRYEGKNLHYFINDLGQFSGKRVLVCGGGDSAVDWSLMLEPIAQSVTIVHRRDKFRAHEHSVEQLKKSSVQVKTPFVPVELVGDEHAIRQVILEHVKEGTKETIDVDAVIVNYGFISSLGPIKNWGLDIEKNAIKVNSRMETNIPGVYAAGDICTYDGKIKLIACGFGEAPIAISSAKTYIDPTARMQPAHSTSLF.

Positions 20, 39, 47, 52, 92, 126, 288, and 329 each coordinate FAD.

This sequence belongs to the ferredoxin--NADP reductase type 2 family. Homodimer. FAD serves as cofactor.

It carries out the reaction 2 reduced [2Fe-2S]-[ferredoxin] + NADP(+) + H(+) = 2 oxidized [2Fe-2S]-[ferredoxin] + NADPH. The polypeptide is Ferredoxin--NADP reductase (Geobacillus kaustophilus (strain HTA426)).